Reading from the N-terminus, the 635-residue chain is Threonine--tRNA ligase (635 aa).

Positions 1-62 (MITITLPDGS…EHDAILRIIT (62 aa)) constitute a TGS domain. The interval 244–535 (DHRKIGKAQD…LIEHYAGIWP (292 aa)) is catalytic. Cysteine 335, histidine 386, and histidine 512 together coordinate Zn(2+).

It belongs to the class-II aminoacyl-tRNA synthetase family. In terms of assembly, homodimer. Zn(2+) is required as a cofactor.

The protein localises to the cytoplasm. The catalysed reaction is tRNA(Thr) + L-threonine + ATP = L-threonyl-tRNA(Thr) + AMP + diphosphate + H(+). Functionally, catalyzes the attachment of threonine to tRNA(Thr) in a two-step reaction: L-threonine is first activated by ATP to form Thr-AMP and then transferred to the acceptor end of tRNA(Thr). Also edits incorrectly charged L-seryl-tRNA(Thr). The polypeptide is Threonine--tRNA ligase (Xylella fastidiosa (strain M12)).